A 151-amino-acid chain; its full sequence is 3-hydroxyacyl-[acyl-carrier-protein] dehydratase FabZ (151 aa).

Residue histidine 54 is part of the active site.

It belongs to the thioester dehydratase family. FabZ subfamily.

Its subcellular location is the cytoplasm. The enzyme catalyses a (3R)-hydroxyacyl-[ACP] = a (2E)-enoyl-[ACP] + H2O. In terms of biological role, involved in unsaturated fatty acids biosynthesis. Catalyzes the dehydration of short chain beta-hydroxyacyl-ACPs and long chain saturated and unsaturated beta-hydroxyacyl-ACPs. This is 3-hydroxyacyl-[acyl-carrier-protein] dehydratase FabZ from Blochmanniella pennsylvanica (strain BPEN).